Here is a 338-residue protein sequence, read N- to C-terminus: MLVMRPAQAADLPQVQRLAADSPVGVTSLPDDAERLRDKILASEASFAAEVSYNGEESYFFVLEDSASGELVGCSAIVASAGFSEPFYSFRNETFVHASRSLSIHNKIHVLSLCHDLTGNSLLTSFYVQRDLVQSVYAELNSRGRLLFMASHPERFADAVVVEIVGYSDEQGESPFWNAVGRNFFDLNYIEAEKLSGLKSRTFLAELMPHYPIYVPLLPDAAQESMGQVHPRAQITFDILMREGFETDNYIDIFDGGPTLHARTSGIRSIAQSRVVPVKIGEAPKSGRPYLVTNGQLQDFRAVVLDLDWAPGKPVALSVEAAEALGVGEGASVRLVAV.

The protein belongs to the succinylarginine dihydrolase family. Heterotetramer of two alpha and two beta subunits.

It catalyses the reaction succinyl-CoA + L-arginine = N(2)-succinyl-L-arginine + CoA + H(+). The protein operates within amino-acid degradation; L-arginine degradation via AST pathway; L-glutamate and succinate from L-arginine: step 1/5. Its function is as follows. Catalyzes the transfer of succinyl-CoA to arginine to produce N(2)-succinylarginine. Also acts on L-ornithine. This Pseudomonas aeruginosa (strain ATCC 15692 / DSM 22644 / CIP 104116 / JCM 14847 / LMG 12228 / 1C / PRS 101 / PAO1) protein is Arginine N-succinyltransferase subunit alpha (astA).